Here is a 297-residue protein sequence, read N- to C-terminus: Internalin C (297 aa).

A signal peptide spans 1-34; that stretch reads MLKKNNWLQNAVIAMLVLIVGLCINMGSGTKVQA. LRR repeat units lie at residues 74-96, 97-120, 122-139, 140-161, 162-184, and 186-207; these read LSGV…MQFF, TNLK…DLTK, EELS…GIPS, ACLS…LIHL, KNLE…GFLS, and LEVL…RLKK.

The protein belongs to the internalin family. In terms of assembly, interacts in vitro with human intestinal mucin-2 (MUC2) but not with mucin-1; binding is slightly better at pH 5.5, (the pH of the intestine) than at pH 7.4. Interacts with the SH3 6 domain of human DNMBP (Tuba). Interacts with I-kappa-B kinase alpha (IKKA, CHUK).

Its subcellular location is the secreted. The protein resides in the host cytoplasm. Its function is as follows. A virulence enhancer that has at least 2 dissociable functions in infection; it impairs translocation of host transcription factor NF-kappa-B to the nucleus and antagonizes the function of the Tuba dynamin-binding protein, promoting bacterial spreading. Perturbs the morphology of host cell junctions by impairing host DNMBP (Tuba) and WASL interaction, altering cortical tension at the cell junctions and allowing bacteria to more efficiently form bacteria-filled cell protrusions which promote bacterial spreading within infected host tissue. Down-regulates the host inflammation response usually induced by Listeria infection. Interacts with host I-kappa-B kinase alpha (IKKA, CHUK), which prevents IKKA from phosphorylating NF-kappa-B inhibitor alpha (IKBA, NFKBIA) and thus delays degradation of phospho-IKBA. Translocation of host transcription factor p65 (a subunit of NF-kappa-B, RELA) into the nucleus is impaired, which prevents activation of NF-KB-regulated genes. Recognized by serum from healthy humans exposed to L.monocytogenes as well from patients who have recovered from listeriosis. This chain is Internalin C, found in Listeria monocytogenes serotype 1/2a (strain EGD / Mackaness).